The chain runs to 150 residues: UPF0178 protein Reut_B5138 (150 aa).

This sequence belongs to the UPF0178 family.

In Cupriavidus pinatubonensis (strain JMP 134 / LMG 1197) (Cupriavidus necator (strain JMP 134)), this protein is UPF0178 protein Reut_B5138.